The following is a 982-amino-acid chain: MAEGGVVDLETQRSEVSALLKTPLRRGDTWYLIDSRWFKQWKKYVGFDSWDKYQMGDQNVYPGPIDNSGLLKDTDTQSLKEHLIDELDYILLPTEGWNKLVSWYSVVESQQPIARKVVEQGMFVKHCKVEVYLTELKLCENGNMNNVVTRRFSKADTIDMIEKEMRTIFSIPDEKETRLWNKYMSNTFEPLNKPESTIQDAGLYQGQMLVIEQKNQEGQWPRGSMPKSSGIPNFSTLPKISPSSLSNNYNNFNSRIMKNSNYCLPSYAAYKNYEYSEPGRHNEQPGLCGLSNLGNTCFMNSAIQCLSNTPPLTEYFLNDKYQDELNMDNPLGMRGEIAKSYAELIKQMWSGKYSYVTPRAFKTQVGRFAPQFSGYQQQDCQELLAFLLDGLHEDLNRIRKKPYIQLKDADGRPDKVVAEEAWENHIKRNDSIIVDIFHGLFKSTLVCPECSKISVTFDPFCYLTLPLPMKKERALEVYLVRMDPLAKPMQYKVIVPKIGNIMDLCTALSSLSGIAPEKMVVTDIYNHRFHRIFAMDENLSSIMERDDIYVFETSINRTEDTEQVIIPVYLREKFRHTSYSHHHGSTLFGQPFLITVPRNITEDKLYNLLLLRMCRYVKATNDTEENDGSLHCNKEHTVNGNGPNGIHEEGSPSEMETDEPDDESSQDQELPSENENSQSEDSVGGDNDSENGLCTEDTCKGQSVTGQKKRLFTFQFSNLGSSDITYIKDDTKYIRFDERQLRLDERSYLALDWDPKLKKKFFDENAAEDFEKHESVDFTPQKKAFMKLKDCIELFTTKEKLGAEDPWYCPNCKEHQQATKKLDLWSLPPVLVVHLKRFSYSRYMRDKLDTLVDFPISDLDMSTFLINPNAGPCCYNLIAVSNHYGGMGGGHYTAFAKNKDDGKWYYFDDSSVSTASEEQIVSKAAYVLFYQRQDTITGTGFFPLDKEVKQGASAATGAPHESDEESNEDENDIENENCMHTN.

The region spanning 7 to 118 (VDLETQRSEV…SQQPIARKVV (112 aa)) is the DUSP domain. The 646-residue stretch at 288–933 (CGLSNLGNTC…AAYVLFYQRQ (646 aa)) folds into the USP domain. The active-site Nucleophile is Cys-297. Residues 623-695 (TEENDGSLHC…DNDSENGLCT (73 aa)) form a disordered region. Residues 655-672 (METDEPDDESSQDQELPS) show a composition bias toward acidic residues. His-891 functions as the Proton acceptor in the catalytic mechanism. Residues 950–982 (QGASAATGAPHESDEESNEDENDIENENCMHTN) form a disordered region. Acidic residues predominate over residues 962-975 (SDEESNEDENDIEN).

The protein belongs to the peptidase C19 family.

The protein resides in the cytoplasm. Its subcellular location is the nucleus. It carries out the reaction Thiol-dependent hydrolysis of ester, thioester, amide, peptide and isopeptide bonds formed by the C-terminal Gly of ubiquitin (a 76-residue protein attached to proteins as an intracellular targeting signal).. In terms of biological role, hydrolase that removes conjugated ubiquitin from target proteins and regulates various pathways such as the TGF-beta receptor signaling and NF-kappa-B pathways. Acts as a key regulator of TGF-beta receptor signaling pathway, but the precise mechanism is still unclear: according to a report, acts by promoting deubiquitination of monoubiquitinated R-SMADs, thereby alleviating inhibition of R-SMADs and promoting activation of TGF-beta target genes. According to another reports, regulates the TGF-beta receptor signaling pathway by mediating deubiquitination and stabilization of tgfbr1, leading to an enhanced TGF-beta signal. May also regulate gene expression and/or DNA repair through the deubiquitination of histone H2B. Involved in endosome organization by mediating deubiquitination of rnf26 target(s), releasing vesicles that are restrained in the perinuclear region. The polypeptide is Ubiquitin carboxyl-terminal hydrolase 15 (usp15) (Xenopus tropicalis (Western clawed frog)).